Reading from the N-terminus, the 930-residue chain is Urea transporter 2 (930 aa).

The segment covering 1-11 has biased composition (basic and acidic residues); the sequence is MSDHHPLKEMS. A disordered region spans residues 1–90; the sequence is MSDHHPLKEM…KRRESEVSRR (90 aa). 2 stretches are compositionally biased toward low complexity: residues 12–25 and 32–43; these read DSNSSPLLPEPLSS and SELSSPTWPSSS. Positions 56–89 are enriched in basic and acidic residues; that stretch reads PEEKDLRSSDEDSHIVKIEKPNERNKRRESEVSR. Helical transmembrane passes span 145–165, 185–205, 213–233, 242–262, 280–300, 311–331, 350–372, and 401–421; these read ISGLIIFIGLLIQNPWWTIAG, AIASGLHGYNGMLVGLLMAVF, WWLLFPVTFTSMACPIISSAL, LPVFTLPFNIALTLYLAATGH, NITWTEIEMPLLLQTIPVGVG, GGVILVALFISSPLICLHAAI, IYLGLWSYNCVLSCIAIGGMFYA, and VVGVPSGTWAFCLSTLTFLLL. Positions 452–479 are disordered; that stretch reads SEEEKSPNGGSGEQSHGSGQWKAEESSE. At Ser-487 the chain carries Phosphoserine. 4 consecutive transmembrane segments (helical) span residues 610–630, 648–668, 676–696, and 705–725; these read GILIVLGLFVQNPWWAISGCL, AIAAGLHGYNGVLVGLLMAVF, WWLLLPVIVMSMTCPILSSAL, and LPVFTLPFNIAVTLYLAATGH. Asn-743 carries N-linked (GlcNAc...) asparagine glycosylation. The next 4 membrane-spanning stretches (helical) occupy residues 774–794, 813–833, 842–862, and 864–884; these read GGIFLVALFISSPLICLHAAI, IYFGLCGFNSTLACIAIGGMF, LLAIACALFAAYLGAALANML, and VFGLPPCTWPFCLSALTFLLL.

This sequence belongs to the urea transporter family. In terms of tissue distribution, highly expressed in kidney medulla (at protein level). Also detected in testes, heart, brain and liver (at protein level). In the kidney, present in thin descending limbs of the loop of Henle and in the middle and terminal inner medullary collecting ducts. Expressed in the kidney medulla. As to expression, expressed in the peritubular myoid cells forming the outermost layer of the seminiferous tubules within the testes and is not detected in kidney. Expression levels are coordinated with the stage of testes development and increase 15 days postpartum, commensurate with the start of seminiferous tubule fluid movement.

Its subcellular location is the apical cell membrane. It is found in the basolateral cell membrane. The catalysed reaction is urea(in) = urea(out). Inhibited by phloretin. Activated by forskolin, 3-isobutyl-1-methylxanthine (IBMX) and cAMP. Its activity is regulated as follows. Inhibited by phloretin. With respect to regulation, inhibited by phloretin. Activated by forskolin, 3-isobutyl-1-methylxanthine (IBMX) and cAMP. In terms of biological role, mediates the transport of urea driven by a concentration gradient across the cell membrane of the renal inner medullary collecting duct which is critical to the urinary concentrating mechanism. Mediates the transport of urea driven by a concentration gradient across the cell membrane. Implicated in the urea movement across the blood-testis barrier and does not translocate water. The protein is Urea transporter 2 (Slc14a2) of Mus musculus (Mouse).